Consider the following 371-residue polypeptide: Cathepsin L1 (371 aa).

A signal peptide spans 1–48 (MNHLGVFETRFRPRTRHKSQRAQLIPEQITMRTAVLLPLLALLAVAQA). Residues 49–153 (VSFADVVMEE…VTFISPAHVT (105 aa)) constitute a propeptide, activation peptide. An N-linked (GlcNAc...) asparagine glycan is attached at Asn-127. Cystine bridges form between Cys-175–Cys-218, Cys-209–Cys-251, and Cys-310–Cys-360. Cys-178 is an active-site residue. His-317 is an active-site residue. A propeptide spanning residues 327 to 329 (DES) is cleaved from the precursor. The active site involves Asn-338.

It belongs to the peptidase C1 family. In terms of assembly, dimer of a heavy and a light chain linked by disulfide bonds. As to expression, in the embryo, predominantly expressed in the midgut. Also expressed in larval alimentary organs such as salivary gland and midgut including gastric caeca.

It localises to the lysosome. It catalyses the reaction Specificity close to that of papain. As compared to cathepsin B, cathepsin L exhibits higher activity toward protein substrates, but has little activity on Z-Arg-Arg-NHMec, and no peptidyl-dipeptidase activity.. Functionally, important for the overall degradation of proteins in lysosomes. Essential for adult male and female fertility. May play a role in digestion. The chain is Cathepsin L1 from Drosophila melanogaster (Fruit fly).